Here is a 457-residue protein sequence, read N- to C-terminus: D-hydantoinase (457 aa).

The Zn(2+) site is built by His-57 and His-59. Position 69 is a phosphoserine (Ser-69). Lys-148 lines the Zn(2+) pocket. The residue at position 148 (Lys-148) is an N6-carboxylysine. Tyr-153 provides a ligand contact to substrate. Residues His-181 and His-237 each coordinate Zn(2+). Thr-286 contacts substrate. Asp-313 lines the Zn(2+) pocket. Asn-335 contacts substrate.

This sequence belongs to the metallo-dependent hydrolases superfamily. Hydantoinase/dihydropyrimidinase family. Homotetramer. The cofactor is Zn(2+). Carboxylation allows a single lysine to coordinate two zinc ions.

Its function is as follows. Catalyzes the stereospecific hydrolysis of the cyclic amide bond of D-hydantoin derivatives. This is D-hydantoinase (hyuA) from Rhizobium radiobacter (Agrobacterium tumefaciens).